Here is a 266-residue protein sequence, read N- to C-terminus: Ribonuclease 3 (266 aa).

The interval 1–35 (MMDESADIKPVPTSEDVAAPSGTEPVAPAPKKKRA) is disordered. Positions 43–171 (MAAIEQRLGH…VIGAVYLDGG (129 aa)) constitute an RNase III domain. Position 84 (Glu84) interacts with Mg(2+). Residue Asp88 is part of the active site. Residues Asp157 and Glu160 each contribute to the Mg(2+) site. Glu160 is an active-site residue. The DRBM domain occupies 196–265 (DPKTVLQEWA…ASAMIVREGV (70 aa)).

This sequence belongs to the ribonuclease III family. Homodimer. The cofactor is Mg(2+).

Its subcellular location is the cytoplasm. The catalysed reaction is Endonucleolytic cleavage to 5'-phosphomonoester.. Functionally, digests double-stranded RNA. Involved in the processing of primary rRNA transcript to yield the immediate precursors to the large and small rRNAs (23S and 16S). Processes some mRNAs, and tRNAs when they are encoded in the rRNA operon. Processes pre-crRNA and tracrRNA of type II CRISPR loci if present in the organism. The sequence is that of Ribonuclease 3 from Nitrobacter winogradskyi (strain ATCC 25391 / DSM 10237 / CIP 104748 / NCIMB 11846 / Nb-255).